The sequence spans 183 residues: ADP-ribosylation factor-like protein 5 (183 aa).

GTP is bound by residues 27–34 (GLNAAGKT), 70–74 (DLGGQ), and 129–132 (NKQD).

The protein belongs to the small GTPase superfamily. Arf family.

Functionally, may bind and exchange GTP and GDP. The sequence is that of ADP-ribosylation factor-like protein 5 (arl5) from Dictyostelium discoideum (Social amoeba).